We begin with the raw amino-acid sequence, 173 residues long: MPRTQKNDNFVDKSFTVMADIILKILPTNKKAKEAFVYYRDGMSAQAEGEYAEALEYYEEALTLEEDTNDRGYILYNMGLIYASNGDHNKALELYHQAIELNPRLPQALNNIAVIYHYQGEKEKEAGDNEAGEALFDQAADYWIRAIRMAPNNYIEAQNWLKTTGRSQIDVFF.

3 TPR repeats span residues 35–68, 72–105, and 120–153; these read AFVY…EEDT, GYIL…NPRL, and GEKE…APNN.

This sequence belongs to the Ycf3 family.

It is found in the cellular thylakoid membrane. Its function is as follows. Essential for the assembly of the photosystem I (PSI) complex. May act as a chaperone-like factor to guide the assembly of the PSI subunits. This is Photosystem I assembly protein Ycf3 from Nostoc punctiforme (strain ATCC 29133 / PCC 73102).